Reading from the N-terminus, the 493-residue chain is Uridine 5'-monophosphate synthase (493 aa).

The segment at 1-207 (MVAQNSDKMR…VAKYIAAVQI (207 aa)) is OPRTase. Positions 208-233 (NSDGTFVGGDKGDVVRANDLQRTKLT) are domain linker. The OMPdecase stretch occupies residues 234–493 (YENRANLAKS…WAAYQDRVAK (260 aa)). The active site involves Lys-320.

This sequence in the N-terminal section; belongs to the purine/pyrimidine phosphoribosyltransferase family. It in the C-terminal section; belongs to the OMP decarboxylase family.

The enzyme catalyses orotidine 5'-phosphate + diphosphate = orotate + 5-phospho-alpha-D-ribose 1-diphosphate. It catalyses the reaction orotidine 5'-phosphate + H(+) = UMP + CO2. It functions in the pathway pyrimidine metabolism; UMP biosynthesis via de novo pathway; UMP from orotate: step 1/2. The protein operates within pyrimidine metabolism; UMP biosynthesis via de novo pathway; UMP from orotate: step 2/2. This Drosophila melanogaster (Fruit fly) protein is Uridine 5'-monophosphate synthase (r-l).